We begin with the raw amino-acid sequence, 244 residues long: Protein crossbronx (244 aa).

The UBC core domain maps to 20 to 176 (QQEYKILAEY…VQKNIKESKD (157 aa)).

Belongs to the ubiquitin-conjugating enzyme family. FTS subfamily.

The chain is Protein crossbronx (cbx) from Drosophila yakuba (Fruit fly).